The primary structure comprises 540 residues: Chaperonin GroEL 1 (540 aa).

ATP contacts are provided by residues 29–32 (TLGP), 86–90 (DGTTT), Gly-413, 477–479 (NAA), and Asp-493.

The protein belongs to the chaperonin (HSP60) family. Forms a cylinder of 14 subunits composed of two heptameric rings stacked back-to-back. Interacts with the co-chaperonin GroES.

Its subcellular location is the cytoplasm. The enzyme catalyses ATP + H2O + a folded polypeptide = ADP + phosphate + an unfolded polypeptide.. In terms of biological role, together with its co-chaperonin GroES, plays an essential role in assisting protein folding. The GroEL-GroES system forms a nano-cage that allows encapsulation of the non-native substrate proteins and provides a physical environment optimized to promote and accelerate protein folding. This Salinispora arenicola (strain CNS-205) protein is Chaperonin GroEL 1.